We begin with the raw amino-acid sequence, 416 residues long: Protein MID1-COMPLEMENTING ACTIVITY 2 (416 aa).

A coiled-coil region spans residues 191-219; it reads CEALKTEEEKLQLELQRSRARYDADQCEV. The chain crosses the membrane as a helical span at residues 338 to 354; that stretch reads LIVYSLILSCCCYTCCI.

Expressed in roots, leaves, stems, flowers and siliques. In the root, high levels of expression in vascular tissues, in the stele and endodermis, but no expression in the cortex, epidermis, root cap, promeristem and adjacent elongation zone of the primary root. Not expressed in root hairs. Detected in shoot apical meristem, leaf mesophyll cells and vascular tissues, upper half of inflorescence, but not in petioles of rosette leaves.

It is found in the cell membrane. Its activity is regulated as follows. Inhibited by GdCl(3), but not by verapamil. Functionally, calcium-permeable stretch-activated channel component. Probably involved in mechanosensing and in mechano-stimulated calcium uptake mechanism. This chain is Protein MID1-COMPLEMENTING ACTIVITY 2 (MCA2), found in Arabidopsis thaliana (Mouse-ear cress).